A 140-amino-acid polypeptide reads, in one-letter code: Nuclear receptor 2C2-associated protein (140 aa).

This sequence belongs to the NR2C2AP family. In terms of assembly, interacts with NR2C2/TR4.

The protein resides in the nucleus. May act as a repressor of NR2C2-mediated transactivation by suppressing the binding between NR2C2/TR4 and the TR4-response element in target genes. The protein is Nuclear receptor 2C2-associated protein (NR2C2AP) of Bos taurus (Bovine).